Consider the following 336-residue polypeptide: Large ribosomal subunit protein mL39 (336 aa).

Residues 60–126 (EKIEVKHVGK…TKSCEIKFLT (67 aa)) enclose the TGS domain. Position 123 is an N6-acetyllysine (Lys123).

This sequence belongs to the mitochondrion-specific ribosomal protein mL39 family. Component of the mitochondrial ribosome large subunit (39S) which comprises a 16S rRNA and about 50 distinct proteins.

The protein localises to the mitochondrion. The protein is Large ribosomal subunit protein mL39 (Mrpl39) of Mus musculus (Mouse).